The primary structure comprises 620 residues: Chaperone protein DnaK (620 aa).

Thr-197 bears the Phosphothreonine; by autocatalysis mark. The segment at 597-620 is disordered; sequence AMANKNNAEQPKKKDDDVIDAEVE.

It belongs to the heat shock protein 70 family.

Its function is as follows. Acts as a chaperone. This Helicobacter pylori (strain G27) protein is Chaperone protein DnaK.